The chain runs to 185 residues: Elongation factor P (185 aa).

Belongs to the elongation factor P family.

Its subcellular location is the cytoplasm. Its pathway is protein biosynthesis; polypeptide chain elongation. Functionally, involved in peptide bond synthesis. Stimulates efficient translation and peptide-bond synthesis on native or reconstituted 70S ribosomes in vitro. Probably functions indirectly by altering the affinity of the ribosome for aminoacyl-tRNA, thus increasing their reactivity as acceptors for peptidyl transferase. The polypeptide is Elongation factor P (Geobacillus sp. (strain WCH70)).